Reading from the N-terminus, the 474-residue chain is Equilibrative nucleoside transporter 3 (474 aa).

Over 1–53 (MAIISEDDFRHTSNSTYRTASSSLRADQEALLEKLLDRPPPSLQRPEDRFNGT) the chain is Cytoplasmic. 2 positions are modified to phosphoserine: Ser-21 and Ser-23. Residues 31–32 (LL) carry the Dileucine internalization motif motif. A helical membrane pass occupies residues 54 to 74 (YIIFFSLGIGGLLPWNFFVTA). Over 75–105 (QEYWIFKLSNCSSPAAGEEPKDSDILNYFES) the chain is Extracellular. A glycan (N-linked (GlcNAc...) asparagine) is linked at Asn-84. The chain crosses the membrane as a helical span at residues 106–126 (YLAVASTVPSVLCLALNFLLV). At 127 to 134 (NRVPIRVR) the chain is on the cytoplasmic side. Residues 135–155 (VLASLTVMLAIFIVMTVLVKV) traverse the membrane as a helical segment. The Extracellular portion of the chain corresponds to 156-161 (DTSSWT). The chain crosses the membrane as a helical span at residues 162-182 (HSFFTITITCMAILSGTSTIF). Topologically, residues 183–201 (NSSVFGMTGSFPMRNSQAL) are cytoplasmic. A helical transmembrane segment spans residues 202-222 (ISGGAMGGTLSAVASLVDLAV). The Extracellular segment spans residues 223-230 (ASDVTDST). A helical membrane pass occupies residues 231–251 (LAFFLTADIFLALCIGLYLLL). The Cytoplasmic segment spans residues 252-305 (PRLDYARYYMKPVWPTVFSGEEQLPQDSPSPTSVAPGSSDPQTPPLGPILKKTT). The disordered stretch occupies residues 272–294 (EEQLPQDSPSPTSVAPGSSDPQT). A compositionally biased stretch (polar residues) spans 276 to 292 (PQDSPSPTSVAPGSSDP). The helical transmembrane segment at 306 to 326 (GLGFCIIYLFFITSLIFPAIC) threads the bilayer. The Extracellular segment spans residues 327 to 339 (TNIESLSKGSGSP). The helical transmembrane segment at 340 to 357 (WSTKFFVPLTTFLLYNFA) threads the bilayer. At 358–376 (DLCGRQVTAWIQVPGPRSK) the chain is on the cytoplasmic side. The chain crosses the membrane as a helical span at residues 377–397 (ALPGLALLRTCFVPLFVFCNY). Residues 398-414 (QPRGHLHTVLFQSDVYP) are Extracellular-facing. Residues 415-435 (VLFTSLLGLSNGYLSTLALIY) form a helical membrane-spanning segment. The Cytoplasmic segment spans residues 436 to 453 (GPKIVPRELAEATGVVMT). Residues 454–474 (FYMGLGLVLGSACSALLVHLI) form a helical membrane-spanning segment.

Belongs to the SLC29A/ENT transporter (TC 2.A.57) family.

The protein localises to the lysosome membrane. The protein resides in the late endosome membrane. It localises to the mitochondrion membrane. It is found in the cell membrane. The catalysed reaction is adenosine(in) = adenosine(out). It carries out the reaction guanosine(in) = guanosine(out). The enzyme catalyses inosine(in) = inosine(out). It catalyses the reaction uridine(out) = uridine(in). The catalysed reaction is cytidine(in) = cytidine(out). It carries out the reaction thymidine(in) = thymidine(out). The enzyme catalyses 2'-deoxyadenosine(in) = 2'-deoxyadenosine(out). It catalyses the reaction 2'-deoxycytidine(in) = 2'-deoxycytidine(out). The catalysed reaction is guanine(out) = guanine(in). It carries out the reaction uracil(in) = uracil(out). The enzyme catalyses (R)-noradrenaline(out) = (R)-noradrenaline(in). It catalyses the reaction dopamine(out) = dopamine(in). The catalysed reaction is serotonin(out) = serotonin(in). It carries out the reaction tyramine(in) = tyramine(out). The enzyme catalyses ATP(in) = ATP(out). Functionally, uniporter that mediates the facilitative transport of nucleoside across lysosomal and mitochondrial membranes. Functions as a non-electrogenic Na(+)-independent transporter. Substrate transport is pH-dependent and enhanced under acidic condition, probably reflecting the location of the transporter in acidic intracellular compartments. Proton is not a cotransporting ion but most likely change the ionization state of the transporter which dictates transport-permissible/impermissible conformation for nucleoside translocation. May direct the nucleoside transport from lysosomes to cytosol or cytosol to mitochondria to facilitate the fundamental function of salvage synthesis of nucleic acids. Involved in the transport of nucleosides (adenosine, guanosine, uridine, thymidine, cytidine and inosine) and deoxynucleosides (deoxyadenosine, deoxycytidine). Also mediates transport of purine nucleobases (adenine, guanine) and pyrimidine nucleobases (uracil). Also able to transport monoamine neurotransmitters dopamine, serotonin, noradrenaline and tyramine. Capable of transporting ATP. Mediates nucleoside export from lysosomes in macrophages, which regulates macrophage functions and numbers. This Bos taurus (Bovine) protein is Equilibrative nucleoside transporter 3 (SLC29A3).